A 390-amino-acid chain; its full sequence is tRNA(Met) cytidine acetate ligase (390 aa).

Residues 7 to 20 (VVEYNPFHNGHKLH), Gly-101, Asn-162, and Arg-187 contribute to the ATP site.

This sequence belongs to the TmcAL family.

It localises to the cytoplasm. It carries out the reaction cytidine(34) in elongator tRNA(Met) + acetate + ATP = N(4)-acetylcytidine(34) in elongator tRNA(Met) + AMP + diphosphate. Functionally, catalyzes the formation of N(4)-acetylcytidine (ac(4)C) at the wobble position of elongator tRNA(Met), using acetate and ATP as substrates. First activates an acetate ion to form acetyladenylate (Ac-AMP) and then transfers the acetyl group to tRNA to form ac(4)C34. This is tRNA(Met) cytidine acetate ligase from Listeria monocytogenes serotype 4b (strain CLIP80459).